Here is a 757-residue protein sequence, read N- to C-terminus: Transmembrane channel-like protein 1 (757 aa).

Residues 1–74 (MLQIQVEEKE…RRRLRRGAEE (74 aa)) form a disordered region. At 1–176 (MLQIQVEEKE…KIKAIESQFG (176 aa)) the chain is on the cytoplasmic side. Positions 8-23 (EKEEDTEESSSEEEED) are enriched in acidic residues. Phosphoserine is present on serine 30. Phosphothreonine is present on threonine 38. Residues 43-54 (NEDDPEPEPEDE) show a composition bias toward acidic residues. Residues 81 to 130 (EELERLKALLDENRQMIATVKCKPWKMEKKIEVLKEAKKFVSENEGALGK) are required for interaction with CIB2. Position 122 is a phosphoserine (serine 122). A helical membrane pass occupies residues 177 to 214 (SSVASYFLFLRWMYGVNMVLFVLTFSLIMLPEYLWGLP). Residues 215–265 (YGSLPRKTVPRAEEASAANFGVLYDFNGLAQYSVLFYGYYDNKRTIGWLNF) lie on the Extracellular side of the membrane. A helical membrane pass occupies residues 266-297 (RLPLSYFLVGIMCIGYSFLVVLKAMTKNIGDD). Positions 298 to 352 (GGGDDNTFNFSWKVFCSWDYLIGNPETADNKFNSITMNFKEAIIEERAAQVEENI) are required for interaction with CIB2. The Cytoplasmic segment spans residues 298-353 (GGGDDNTFNFSWKVFCSWDYLIGNPETADNKFNSITMNFKEAIIEERAAQVEENIH). Phosphoserine is present on serine 308. The chain crosses the membrane as a helical span at residues 354–384 (LIRFLRFLANFFVFLTLGASGYLIFWAVKRS). Residues 385 to 396 (QEFAQQDPDTLG) lie on the Extracellular side of the membrane. Residue threonine 394 is modified to Phosphothreonine. The chain crosses the membrane as a helical span at residues 397–424 (WWEKNEMNMVMSLLGMFCPTLFDLFAEL). Topologically, residues 425–428 (EDYH) are cytoplasmic. A helical membrane pass occupies residues 429–463 (PLIALKWLLGRIFALLLGNLYVFILALMDEINNKI). Residues 464–512 (EEEKLVKANITLWEANMIKAYNESLSGLSGNTTGAPFFVHPADVPRGPC) are Extracellular-facing. A helical membrane pass occupies residues 513–550 (WETMVGQEFVRLTVSDVLTTYVTILIGDFLRACFVRFC). The Cytoplasmic portion of the chain corresponds to 551 to 569 (NYCWCWDLEYGYPSYTEFD). A helical membrane pass occupies residues 570–590 (ISGNVLALIFNQGMIWMGSFF). The Extracellular portion of the chain corresponds to 591 to 593 (APS). The chain crosses the membrane as a helical span at residues 594–616 (LPGINILRLHTSMYFQCWAVMCC). Residues 617 to 630 (NVPEARVFKASRSN) lie on the Cytoplasmic side of the membrane. The chain crosses the membrane as a helical span at residues 631 to 654 (NFYLGMLLLILFLSTMPVLYMIVS). At 655–697 (LPPSFDCGPFSGKNRMFEVIGETLEHDFPSWMAKILRQLSNPG) the chain is on the extracellular side. A helical transmembrane segment spans residues 698 to 731 (LVIAVILVMVLTIYYLNATAKGQKAANLDLKKKM). The Cytoplasmic segment spans residues 732–757 (KQQALENKMRNKKMAAARAAAAAGGQ).

This sequence belongs to the TMC family. Forms the MET channel composed of TMC dimer (TMC1 or TMC2), TMIE, TOMT, CIB (CIB2 or CIB3), LHFPL5 and PCDH15. Interacts with PIEZO1 and PIEZO2; the interaction may be part of the MET complex. The interaction of TMC1 and TMC2 with TOMT is required for the transportation of TMC1/2 into the stereocilia of hair cells. Interacts (via N-terminus) with both isoforms CD1 and CD3 of PCDH15. Can form a heterodimer with TMC2, TMC5 or TMC7. Detected in cochlear inner and outer hair cells and in neurosensory epithelia of the vestibular end organs. Also expressed in cortex, cerebellum, eye, colon, ovary and testis.

The protein resides in the cell membrane. It catalyses the reaction Ca(2+)(in) = Ca(2+)(out). Pore-forming subunit of the mechanotransducer (MET) non-selective cation channel complex located at the tips of stereocilia of cochlear hair cells and that mediates sensory transduction in the auditory system. The MET complex is composed of two dimeric pore-forming ion-conducting transmembrane TMC (TMC1 or TMC2) subunits, several auxiliary proteins including LHFPL5, TMIE, CIB2/3 and TOMT, the tip-link PCDH15, and possibly the PIEZO subunits. MET channel is activated by tension in the tip-link extending from the side wall of one stereocilium to the tip of the adjacent shorter stereocilium, where the channel is located. TMC1 MET channel is highly permeable to calcium and likely transports monovalent cations. Also involved in vestibular hair cells transduction current. The polypeptide is Transmembrane channel-like protein 1 (Mus musculus (Mouse)).